A 106-amino-acid polypeptide reads, in one-letter code: Iron-sulfur cluster assembly protein CyaY (106 aa).

Belongs to the frataxin family.

In terms of biological role, involved in iron-sulfur (Fe-S) cluster assembly. May act as a regulator of Fe-S biogenesis. This chain is Iron-sulfur cluster assembly protein CyaY, found in Dickeya chrysanthemi (Pectobacterium chrysanthemi).